A 200-amino-acid polypeptide reads, in one-letter code: Lipopolysaccharide core heptose(II)-phosphate phosphatase (200 aa).

An N-terminal signal peptide occupies residues 1–25 (MLAFCRSSLKSKKYFIILLALAAIA).

The protein belongs to the phosphoglycerate mutase family. Ais subfamily.

The protein resides in the periplasm. Its pathway is bacterial outer membrane biogenesis; lipopolysaccharide metabolism. Catalyzes the dephosphorylation of heptose(II) of the outer membrane lipopolysaccharide core. This chain is Lipopolysaccharide core heptose(II)-phosphate phosphatase, found in Escherichia coli O9:H4 (strain HS).